We begin with the raw amino-acid sequence, 523 residues long: NEDD8-activating enzyme E1 regulatory subunit AXL (523 aa).

It belongs to the ubiquitin-activating E1 family. ULA1 subfamily. Heterodimer of ECR1 and AXL1. The complex binds to RUB1/NEDD8 and RCE1.

It is found in the nucleus. It participates in protein modification; protein neddylation. Functionally, regulatory subunit of the dimeric ECR1-AXL1 E1 enzyme. E1 activates RUB1/NEDD8 by first adenylating its C-terminal glycine residue with ATP, thereafter linking this residue to the side chain of the catalytic cysteine, yielding a RUB1-ECR1 thioester and free AMP. E1 finally transfers RUB1 to the catalytic cysteine of RCE1. May function redundantly with AXR1 in the RUB conjugating pathway. Seems not to be functionally equivalent to AXR1 in vivo. In Arabidopsis thaliana (Mouse-ear cress), this protein is NEDD8-activating enzyme E1 regulatory subunit AXL.